The chain runs to 314 residues: Beta-lactamase (314 aa).

Positions 1–39 (MHPSTSRPSRRTLLTATAGAALAAATLVPGTAHASSGGR) form a signal peptide, tat-type signal. Residues 31-50 (TAHASSGGRGHGSGSVSDAE) form a disordered region. The active-site Acyl-ester intermediate is serine 89. 259–261 (KTG) contributes to the substrate binding site.

It belongs to the class-A beta-lactamase family. Predicted to be exported by the Tat system. The position of the signal peptide cleavage has been experimentally proven.

It catalyses the reaction a beta-lactam + H2O = a substituted beta-amino acid. This is Beta-lactamase from Streptomyces albus G.